The chain runs to 263 residues: tRNA (guanine-N(1)-)-methyltransferase (263 aa).

S-adenosyl-L-methionine-binding positions include glycine 113 and 137 to 142 (LGDYVL).

It belongs to the RNA methyltransferase TrmD family. As to quaternary structure, homodimer.

The protein localises to the cytoplasm. It catalyses the reaction guanosine(37) in tRNA + S-adenosyl-L-methionine = N(1)-methylguanosine(37) in tRNA + S-adenosyl-L-homocysteine + H(+). Functionally, specifically methylates guanosine-37 in various tRNAs. The protein is tRNA (guanine-N(1)-)-methyltransferase of Renibacterium salmoninarum (strain ATCC 33209 / DSM 20767 / JCM 11484 / NBRC 15589 / NCIMB 2235).